Consider the following 214-residue polypeptide: tRNA (guanine-N(7)-)-methyltransferase (214 aa).

Positions 43, 68, 95, and 117 each coordinate S-adenosyl-L-methionine. Residue Asp-117 is part of the active site. Residues Lys-121, Asp-153, and 191–194 (TEYE) contribute to the substrate site.

This sequence belongs to the class I-like SAM-binding methyltransferase superfamily. TrmB family.

The enzyme catalyses guanosine(46) in tRNA + S-adenosyl-L-methionine = N(7)-methylguanosine(46) in tRNA + S-adenosyl-L-homocysteine. Its pathway is tRNA modification; N(7)-methylguanine-tRNA biosynthesis. In terms of biological role, catalyzes the formation of N(7)-methylguanine at position 46 (m7G46) in tRNA. This chain is tRNA (guanine-N(7)-)-methyltransferase, found in Lachnoclostridium phytofermentans (strain ATCC 700394 / DSM 18823 / ISDg) (Clostridium phytofermentans).